We begin with the raw amino-acid sequence, 242 residues long: Probable ergothioneine transport ATP-binding protein EgtUA (242 aa).

Residues 2–236 form the ABC transporter domain; the sequence is IEYKNVALRY…PATDFVADLF (235 aa). 34–41 contacts ATP; it reads GPSGSGKT.

Belongs to the ABC transporter superfamily. The complex is probably composed of at least an ATP-binding protein (EgtUA) and a transmembrane protein (EgtUBC).

It localises to the cell inner membrane. It carries out the reaction ergothioneine(out) + ATP + H2O = ergothioneine(in) + ADP + phosphate + H(+). In terms of biological role, part of an ABC transporter complex EgtU required for the uptake of ergothioneine (EGT), a natural low-molecular weight (LMW) thiol antioxidant. Probably responsible for energy coupling to the transport system. This Streptococcus pneumoniae serotype 2 (strain D39 / NCTC 7466) protein is Probable ergothioneine transport ATP-binding protein EgtUA.